We begin with the raw amino-acid sequence, 303 residues long: Phytochrome-associated serine/threonine-protein phosphatase 3 (303 aa).

4 residues coordinate Zn(2+): aspartate 50, histidine 52, aspartate 78, and asparagine 110. Histidine 111 (proton donor) is an active-site residue. 2 residues coordinate Zn(2+): histidine 160 and histidine 234.

Belongs to the PPP phosphatase family. PP-6 (PP-V) subfamily. In terms of assembly, interacts with PHYA and PHYB, mostly when they are phosphorylated and in Pfr forms. Interacts with TAP46. Interacts with NRP. Interacts with PIN1 and PIN2. Interacts with ABI5. Interacts with PIF3 and PIF4. Protein phosphatase 6 (PP6) holoenzyme is a heterotrimeric complex formed by the catalytic subunit FYPP, a SAPS domain-containing subunit (SAL) and a protein phosphatase 2A regulatory subunit A (PP2AA). Requires Zn(2+) as cofactor. As to expression, mostly expressed in flowers. Also detected to a lower extent in stems and leaves. Expressed in roots.

The protein resides in the cytoplasm. The catalysed reaction is O-phospho-L-seryl-[protein] + H2O = L-seryl-[protein] + phosphate. The enzyme catalyses O-phospho-L-threonyl-[protein] + H2O = L-threonyl-[protein] + phosphate. Functionally, catalytic subunit of protein phosphatase 6 (PP6). Dephosphorylates phosphorylated phytochromes, with a preference toward Pfr forms. Plays a major role in the photoperiodic control of flowering time in long days by modulating phytochrome signals in flowering time control. Involved in the regulation of polar auxin transport in roots. Dephosphorylates directly the auxin efflux carriers PIN1 and PIN2, thus promoting their proper polar localization in root cell plasma membrane. Acts antagonistically with the protein kinase PID to regulate the reversible phosphorylation of PIN and polar targeting, subsequently impacting polar auxin transport and plant development. Involved in the regulation of abscisic acid (ABA) signaling during seed germination and postgermination seedling growth. Functions as a negative regulator of ABA signaling through direct dephosphorylation and destabilization of ABI5 protein. Acts antagonistically with the protein kinase SRK2E/SNRK2.6 to regulate ABI5 phosphorylation and ABA responses. Involved in the regulation of phosphorylation status in hypocotyl phototropism. Involved in the negative regulation of photomorphogenesis by controlling the stability and transcriptional activity of PIF3 and PIF4 proteins in the dark, via the regulation of their phosphorylation status. The polypeptide is Phytochrome-associated serine/threonine-protein phosphatase 3 (Arabidopsis thaliana (Mouse-ear cress)).